Here is a 103-residue protein sequence, read N- to C-terminus: ATP synthase F(0) complex subunit g, mitochondrial (103 aa).

At alanine 2 the chain carries N-acetylalanine. An N6-acetyllysine mark is found at lysine 11, lysine 24, lysine 35, and lysine 54.

In terms of assembly, component of the ATP synthase complex composed at least of ATP5F1A/subunit alpha, ATP5F1B/subunit beta, ATP5MC1/subunit c (homooctomer), MT-ATP6/subunit a, MT-ATP8/subunit 8, ATP5ME/subunit e, ATP5MF/subunit f, ATP5MG/subunit g, ATP5MK/subunit k, ATP5MJ/subunit j, ATP5F1C/subunit gamma, ATP5F1D/subunit delta, ATP5F1E/subunit epsilon, ATP5PF/subunit F6, ATP5PB/subunit b, ATP5PD/subunit d, ATP5PO/subunit OSCP. ATP synthase complex consists of a soluble F(1) head domain (subunits alpha(3) and beta(3)) - the catalytic core - and a membrane F(0) domain - the membrane proton channel (subunits c, a, 8, e, f, g, k and j). These two domains are linked by a central stalk (subunits gamma, delta, and epsilon) rotating inside the F1 region and a stationary peripheral stalk (subunits F6, b, d, and OSCP).

The protein localises to the mitochondrion. Its subcellular location is the mitochondrion inner membrane. Its function is as follows. Subunit g, of the mitochondrial membrane ATP synthase complex (F(1)F(0) ATP synthase or Complex V) that produces ATP from ADP in the presence of a proton gradient across the membrane which is generated by electron transport complexes of the respiratory chain. ATP synthase complex consist of a soluble F(1) head domain - the catalytic core - and a membrane F(1) domain - the membrane proton channel. These two domains are linked by a central stalk rotating inside the F(1) region and a stationary peripheral stalk. During catalysis, ATP synthesis in the catalytic domain of F(1) is coupled via a rotary mechanism of the central stalk subunits to proton translocation. In vivo, can only synthesize ATP although its ATP hydrolase activity can be activated artificially in vitro. Part of the complex F(0) domain. The protein is ATP synthase F(0) complex subunit g, mitochondrial of Bos taurus (Bovine).